The primary structure comprises 686 residues: Epsin (686 aa).

An ENTH domain is found at 14–145; the sequence is DAVLNTPEIE…QDDQRIKEER (132 aa). 2 disordered regions span residues 177–417 and 463–571; these read YDSD…FNNN and NSSM…TMRP. Over residues 185-211 the composition is skewed to polar residues; it reads NQRDSYGGNQRDSYGGNQRDSYGGNQR. Positions 212–225 are enriched in basic and acidic residues; sequence ETTRRDSFNGRDEG. A compositionally biased stretch (polar residues) spans 237–256; sequence SYDSDPYSNTRAEYENYSNR. Low complexity-rich tracts occupy residues 269-340 and 383-417; these read SNNS…SGPS and NNTN…FNNN. The segment covering 491–503 has biased composition (polar residues); it reads FDQQSGDFSNKND. Basic and acidic residues predominate over residues 504 to 521; the sequence is GQQKPKDTNDPWSKKDLF. Low complexity predominate over residues 527–547; it reads GNQNPNQSPVNNTNNNNNGNT. Over residues 558-567 the composition is skewed to polar residues; sequence PITSAGSTIP.

It belongs to the epsin family.

It localises to the membrane. The protein localises to the clathrin-coated pit. In terms of biological role, binds to membranes enriched in phosphatidylinositol 4,5-bisphosphate (PtdIns(4,5)P2). The chain is Epsin (epnA) from Dictyostelium discoideum (Social amoeba).